Reading from the N-terminus, the 208-residue chain is Uracil phosphoribosyltransferase (208 aa).

5-phospho-alpha-D-ribose 1-diphosphate-binding positions include R78, R103, and 130-138; that span reads DPMLATGGS. Residues I193 and 198–200 contribute to the uracil site; that span reads GDA. 5-phospho-alpha-D-ribose 1-diphosphate is bound at residue D199.

This sequence belongs to the UPRTase family. Mg(2+) serves as cofactor.

The catalysed reaction is UMP + diphosphate = 5-phospho-alpha-D-ribose 1-diphosphate + uracil. Its pathway is pyrimidine metabolism; UMP biosynthesis via salvage pathway; UMP from uracil: step 1/1. Its activity is regulated as follows. Allosterically activated by GTP. Its function is as follows. Catalyzes the conversion of uracil and 5-phospho-alpha-D-ribose 1-diphosphate (PRPP) to UMP and diphosphate. The protein is Uracil phosphoribosyltransferase of Shewanella sediminis (strain HAW-EB3).